A 370-amino-acid chain; its full sequence is Flagellar P-ring protein (370 aa).

A signal peptide spans 1–21 (MKLLLFILMISSIIIVPVGQA).

Belongs to the FlgI family. The basal body constitutes a major portion of the flagellar organelle and consists of four rings (L,P,S, and M) mounted on a central rod.

It localises to the periplasm. The protein localises to the bacterial flagellum basal body. In terms of biological role, assembles around the rod to form the L-ring and probably protects the motor/basal body from shearing forces during rotation. The sequence is that of Flagellar P-ring protein from Pseudoalteromonas atlantica (strain T6c / ATCC BAA-1087).